A 186-amino-acid chain; its full sequence is ATP synthase subunit delta (186 aa).

It belongs to the ATPase delta chain family. F-type ATPases have 2 components, F(1) - the catalytic core - and F(0) - the membrane proton channel. F(1) has five subunits: alpha(3), beta(3), gamma(1), delta(1), epsilon(1). CF(0) has four main subunits: a(1), b(1), b'(1) and c(10-14). The alpha and beta chains form an alternating ring which encloses part of the gamma chain. F(1) is attached to F(0) by a central stalk formed by the gamma and epsilon chains, while a peripheral stalk is formed by the delta, b and b' chains.

It localises to the cell inner membrane. In terms of biological role, f(1)F(0) ATP synthase produces ATP from ADP in the presence of a proton or sodium gradient. F-type ATPases consist of two structural domains, F(1) containing the extramembraneous catalytic core and F(0) containing the membrane proton channel, linked together by a central stalk and a peripheral stalk. During catalysis, ATP synthesis in the catalytic domain of F(1) is coupled via a rotary mechanism of the central stalk subunits to proton translocation. Its function is as follows. This protein is part of the stalk that links CF(0) to CF(1). It either transmits conformational changes from CF(0) to CF(1) or is implicated in proton conduction. This chain is ATP synthase subunit delta, found in Cereibacter sphaeroides (strain ATCC 17025 / ATH 2.4.3) (Rhodobacter sphaeroides).